A 351-amino-acid polypeptide reads, in one-letter code: Inactive RHOMBOID-like protein 8 (351 aa).

The next 7 membrane-spanning stretches (helical) occupy residues 48-68, 130-150, 160-180, 183-203, 216-236, 239-259, and 294-314; these read TWLV…TMGV, WLHS…FVGI, RIAV…VLFV, IPSI…LSAL, ALAI…LPFI, FANI…LFKP, and IICL…ACWG.

The protein belongs to the peptidase S54 family. Expressed in pollen mother cell.

The protein resides in the golgi apparatus membrane. Its function is as follows. Probable inactive rhomboid-type serine protease. Functionally, probably essential for the meiosis stage-specific callose accumulation and pollen exine formation. The sequence is that of Inactive RHOMBOID-like protein 8 from Arabidopsis thaliana (Mouse-ear cress).